A 459-amino-acid chain; its full sequence is ADP-specific phosphofructokinase (459 aa).

Residues 1–457 form the ADPK domain; it reads MMEFLKDFQK…FASYLSLLKR (457 aa). Residues Glu-268, Glu-298, and Asp-441 each coordinate Mg(2+). The active-site Proton acceptor is the Asp-441.

This sequence belongs to the carbohydrate kinase PfkC family. Mg(2+) serves as cofactor.

It localises to the cytoplasm. It carries out the reaction beta-D-fructose 6-phosphate + ADP = beta-D-fructose 1,6-bisphosphate + AMP + H(+). It functions in the pathway carbohydrate degradation; glycolysis. Catalyzes the phosphorylation of fructose 6-phosphate to fructose 1,6-bisphosphate using ADP as the phosphate donor. This Thermococcus litoralis protein is ADP-specific phosphofructokinase.